The primary structure comprises 185 residues: Elongation factor P (185 aa).

This sequence belongs to the elongation factor P family.

The protein localises to the cytoplasm. Its pathway is protein biosynthesis; polypeptide chain elongation. Functionally, involved in peptide bond synthesis. Stimulates efficient translation and peptide-bond synthesis on native or reconstituted 70S ribosomes in vitro. Probably functions indirectly by altering the affinity of the ribosome for aminoacyl-tRNA, thus increasing their reactivity as acceptors for peptidyl transferase. In Bacillus pumilus (strain SAFR-032), this protein is Elongation factor P.